Reading from the N-terminus, the 339-residue chain is DNA-directed RNA polymerase subunit alpha (339 aa).

Residues 1-235 are alpha N-terminal domain (alpha-NTD); the sequence is MVIQKNWQEL…DQLQVFVNFE (235 aa). The interval 251–339 is alpha C-terminal domain (alpha-CTD); sequence FNPALLKKVD…DLAKRFEEHY (89 aa).

This sequence belongs to the RNA polymerase alpha chain family. In terms of assembly, homodimer. The RNAP catalytic core consists of 2 alpha, 1 beta, 1 beta' and 1 omega subunit. When a sigma factor is associated with the core the holoenzyme is formed, which can initiate transcription.

It catalyses the reaction RNA(n) + a ribonucleoside 5'-triphosphate = RNA(n+1) + diphosphate. Its function is as follows. DNA-dependent RNA polymerase catalyzes the transcription of DNA into RNA using the four ribonucleoside triphosphates as substrates. The protein is DNA-directed RNA polymerase subunit alpha of Methylobacterium radiotolerans (strain ATCC 27329 / DSM 1819 / JCM 2831 / NBRC 15690 / NCIMB 10815 / 0-1).